Consider the following 270-residue polypeptide: MVRVGIIGGSGLYELLENPRIVRLDTPFGHCDVQLGELAGEEVAFIPRHGASHRLPPYKVNYKANLYALNMLEVERIIATNAVGSINPALEPGTIVIPHDFIDMTKCRDVTFYDGETTIKVRGREVSGVVHVSMTPYTYCPEIRASIIEAAEHMGLGVRDGGVYVCTEGNRFETPAEIRAFSILGGDIVGMTGCPEASLARELAICYASISVVTNYAAGVSGAVKLTQGEVIEIFSRKIQDISRLIEETIRRIPKRRECPCKDALSEYLK.

Residues Ser-10 and 48-49 (RH) each bind phosphate. Residue Met-191 participates in substrate binding. Position 192 (Thr-192) interacts with phosphate. Position 215–217 (215–217 (NYA)) interacts with substrate.

The protein belongs to the PNP/MTAP phosphorylase family. MTAP subfamily. As to quaternary structure, homohexamer. Dimer of a homotrimer.

It catalyses the reaction a purine D-ribonucleoside + phosphate = a purine nucleobase + alpha-D-ribose 1-phosphate. The protein operates within purine metabolism; purine nucleoside salvage. Functionally, purine nucleoside phosphorylase which is highly specific for 6-oxopurine nucleosides. Cleaves guanosine or inosine to respective bases and sugar-1-phosphate molecules. Involved in purine salvage. The sequence is that of Probable 6-oxopurine nucleoside phosphorylase from Korarchaeum cryptofilum (strain OPF8).